A 62-amino-acid polypeptide reads, in one-letter code: UPF0370 protein plu2724 (62 aa).

Residues tryptophan 3–isoleucine 23 traverse the membrane as a helical segment. The segment at aspartate 36–proline 62 is disordered.

It belongs to the UPF0370 family.

The protein localises to the cell membrane. This is UPF0370 protein plu2724 from Photorhabdus laumondii subsp. laumondii (strain DSM 15139 / CIP 105565 / TT01) (Photorhabdus luminescens subsp. laumondii).